A 171-amino-acid chain; its full sequence is Ribosome maturation factor RimM (171 aa).

The 73-residue stretch at 98 to 170 (EGEFYLHQII…AVQVSVPEGL (73 aa)) folds into the PRC barrel domain.

Belongs to the RimM family. Binds ribosomal protein uS19.

Its subcellular location is the cytoplasm. Functionally, an accessory protein needed during the final step in the assembly of 30S ribosomal subunit, possibly for assembly of the head region. Essential for efficient processing of 16S rRNA. May be needed both before and after RbfA during the maturation of 16S rRNA. It has affinity for free ribosomal 30S subunits but not for 70S ribosomes. In Pediococcus pentosaceus (strain ATCC 25745 / CCUG 21536 / LMG 10740 / 183-1w), this protein is Ribosome maturation factor RimM.